The sequence spans 294 residues: Glycine--tRNA ligase alpha subunit (294 aa).

Belongs to the class-II aminoacyl-tRNA synthetase family. Tetramer of two alpha and two beta subunits.

It localises to the cytoplasm. It carries out the reaction tRNA(Gly) + glycine + ATP = glycyl-tRNA(Gly) + AMP + diphosphate. The protein is Glycine--tRNA ligase alpha subunit of Sulfurovum sp. (strain NBC37-1).